The primary structure comprises 319 residues: MKKSITTLDLNLLLCLQLLMQERSVTKAAKRMNVTPSAVSKSLAKLRAWFDDPLFVNSPLGLSPTPLMVSMEQNLAEWMQMSNLLLDKPHHQTPRGLKFELAAESPLMMIMLNALSKRIYQRYPQATIKLRNWDYDSLDAITRGEVDIGFSGRESHPRSRELLSSLPLAIDYEVLFSDVPCVWLRKDHPALHETWNLDTFLRYPHISICWEQSDTWALDNVLQELGRERTIAMSLPEFEQSLFMAAQPDNLLLATAPRYCQYYNQLHQLPLVALPLPFDESQQKKLEVPFTLLWHKRNSHNPKIVWLRETIKHLYASMA.

The region spanning 8 to 65 (LDLNLLLCLQLLMQERSVTKAAKRMNVTPSAVSKSLAKLRAWFDDPLFVNSPLGLSPT) is the HTH lysR-type domain. A DNA-binding region (H-T-H motif) is located at residues 25-44 (VTKAAKRMNVTPSAVSKSLA).

The protein belongs to the LysR transcriptional regulatory family.

Involved in anaerobic NO protection. The protein is HTH-type transcriptional regulator YidZ of Escherichia coli O17:K52:H18 (strain UMN026 / ExPEC).